The chain runs to 128 residues: Sulfurtransferase TusD (128 aa).

Cys78 serves as the catalytic Cysteine persulfide intermediate.

This sequence belongs to the DsrE/TusD family. As to quaternary structure, heterohexamer, formed by a dimer of trimers. The hexameric TusBCD complex contains 2 copies each of TusB, TusC and TusD. The TusBCD complex interacts with TusE.

Its subcellular location is the cytoplasm. Part of a sulfur-relay system required for 2-thiolation of 5-methylaminomethyl-2-thiouridine (mnm(5)s(2)U) at tRNA wobble positions. Accepts sulfur from TusA and transfers it in turn to TusE. This chain is Sulfurtransferase TusD, found in Citrobacter koseri (strain ATCC BAA-895 / CDC 4225-83 / SGSC4696).